The chain runs to 69 residues: MLNTCRVPLTDRKVKEKRAMKQHKAMIVALIVICITAVVAALVTRKDLCEVHIRTGQTEVAVFTAYESE.

A helical membrane pass occupies residues 24–44 (KAMIVALIVICITAVVAALVT).

The protein belongs to the Hok/Gef family.

The protein localises to the cell inner membrane. Its function is as follows. Might be the toxic component of a type I toxin-antitoxin (TA) system. Regulatory peptide which completely overlaps hokC and enables hokC expression. The protein is Regulatory protein MokC (mokC) of Escherichia coli (strain K12).